A 358-amino-acid polypeptide reads, in one-letter code: Sulfate/thiosulfate import ATP-binding protein CysA 1 (358 aa).

In terms of domain architecture, ABC transporter spans Ile3 to Leu237. Position 35–42 (Gly35–Thr42) interacts with ATP.

The protein belongs to the ABC transporter superfamily. Sulfate/tungstate importer (TC 3.A.1.6) family. In terms of assembly, the complex is composed of two ATP-binding proteins (CysA), two transmembrane proteins (CysT and CysW) and a solute-binding protein (CysP).

Its subcellular location is the cell inner membrane. It carries out the reaction sulfate(out) + ATP + H2O = sulfate(in) + ADP + phosphate + H(+). The catalysed reaction is thiosulfate(out) + ATP + H2O = thiosulfate(in) + ADP + phosphate + H(+). Part of the ABC transporter complex CysAWTP involved in sulfate/thiosulfate import. Responsible for energy coupling to the transport system. The protein is Sulfate/thiosulfate import ATP-binding protein CysA 1 of Chromobacterium violaceum (strain ATCC 12472 / DSM 30191 / JCM 1249 / CCUG 213 / NBRC 12614 / NCIMB 9131 / NCTC 9757 / MK).